The following is a 585-amino-acid chain: Putative sulfur deprivation response regulator (585 aa).

Helical transmembrane passes span 5–25 (VVDA…RGII), 30–50 (AFAG…MIAA), 83–103 (VASV…IPVV), 117–137 (FMMP…IGTS), and 162–182 (IIGL…SPLL). 2 RCK C-terminal domains span residues 189–274 (MMAA…LPGL) and 288–372 (ETVA…STEW). Helical transmembrane passes span 389–409 (LALF…SMDV), 411–431 (PLST…VLTV), 442–462 (ILLT…TGLA), 482–502 (VAAI…GAAV), and 561–581 (FGLP…VLYF).

It belongs to the CitM (TC 2.A.11) transporter family.

The protein localises to the membrane. In terms of biological role, not known; mutations in SAC1 produces cells that cannot synthesize arylsulfatase and cannot take up sulfate as rapidly as wild-type cells. SAC1 is necessary for cells to survive sulfur deprivation. The chain is Putative sulfur deprivation response regulator (SAC1) from Chlamydomonas reinhardtii (Chlamydomonas smithii).